The primary structure comprises 585 residues: Glutamine--tRNA ligase (585 aa).

Residues 51 to 61 carry the 'HIGH' region motif; it reads PEPNGYLHIGH. Residues 52 to 54 and 58 to 64 contribute to the ATP site; these read EPN and HIGHAKS. The L-glutamine site is built by aspartate 84 and tyrosine 238. ATP-binding positions include threonine 257 and 292-293; that span reads RL. The 'KMSKS' region motif lies at 299–303; the sequence is ITSKR.

This sequence belongs to the class-I aminoacyl-tRNA synthetase family. In terms of assembly, monomer.

The protein localises to the cytoplasm. The catalysed reaction is tRNA(Gln) + L-glutamine + ATP = L-glutaminyl-tRNA(Gln) + AMP + diphosphate. The protein is Glutamine--tRNA ligase of Cupriavidus necator (strain ATCC 17699 / DSM 428 / KCTC 22496 / NCIMB 10442 / H16 / Stanier 337) (Ralstonia eutropha).